Reading from the N-terminus, the 276-residue chain is Melibiose/raffinose/stachyose import permease protein MelC (276 aa).

The next 6 membrane-spanning stretches (helical) occupy residues 11–31 (IITL…YILL), 74–94 (IITG…AYPL), 104–124 (AVFA…MVPL), 139–159 (IAIF…YSGF), 186–206 (IVFP…CVFI), and 240–260 (LHLV…LFLA). Residues 69 to 261 (FINTMIITGF…LPMVVLFLAL (193 aa)) enclose the ABC transmembrane type-1 domain.

Belongs to the binding-protein-dependent transport system permease family. In terms of assembly, the complex is composed of two ATP-binding proteins (MsmX), two transmembrane proteins (MelC and MelD) and a solute-binding protein (MelE).

It localises to the cell membrane. Its function is as follows. Part of the ABC transporter complex MelEDC-MsmX involved in melibiose, raffinose and stachyose import. Probably responsible for the translocation of the substrate across the membrane. The protein is Melibiose/raffinose/stachyose import permease protein MelC of Bacillus subtilis (strain 168).